Reading from the N-terminus, the 707-residue chain is Serine/threonine protein kinase UL97 (707 aa).

The span at 1–14 (MSSALRSRARSASL) shows a compositional bias: low complexity. 4 disordered regions span residues 1–32 (MSSALRSRARSASLGTTTQGWDPPPLRRPSRA), 113–147 (DGEKEDAASDKENQRRPVVPSTSSRGSAASGDGYH), 176–199 (FTGGSDPSDSVSGVRGGRKRPLRP), and 231–264 (ESQDSAVASGPGRVPQPLSGSSGEESATAVEADS). A compositionally biased stretch (basic and acidic residues) spans 113-127 (DGEKEDAASDKENQR). Positions 178–188 (GGSDPSDSVSG) are enriched in low complexity. Asp-456 acts as the Proton acceptor in catalysis.

It belongs to the protein kinase superfamily. Tyr protein kinase family. HCMV ganciclovir subfamily. In terms of assembly, interacts with UL83. Autophosphorylates on serine and threonine residues.

The protein resides in the virion. The enzyme catalyses L-seryl-[protein] + ATP = O-phospho-L-seryl-[protein] + ADP + H(+). It catalyses the reaction L-threonyl-[protein] + ATP = O-phospho-L-threonyl-[protein] + ADP + H(+). Its function is as follows. Serine/threonine protein kinase that plays important roles in several processes including nuclear viral egress, viral replication or regulation of host cell cycle progression. Participates in the acquisition of tegument during virion morphogenesis in the nucleus. Redistributes the host nuclear lamina by phosphorylating cellular Lamins-A/C. Plays a role in viral DNA synthesis by phosphorylating the DNA polymerase processivity factor UL44. Stimulates host cell cycle to support viral DNA synthesis by phosphorylating host retinoblastoma/RB1 protein. Additional substrates have been identified including host EF1D or H2B. Also phosphorylates host SAMHD1 and thereby counteracts its antiviral effect by reducing its dNTP hydrolase activity. The protein is Serine/threonine protein kinase UL97 (UL97) of Homo sapiens (Human).